The sequence spans 485 residues: Glycogen synthase (485 aa).

ADP-alpha-D-glucose is bound at residue Lys-18.

This sequence belongs to the glycosyltransferase 1 family. Bacterial/plant glycogen synthase subfamily.

It catalyses the reaction [(1-&gt;4)-alpha-D-glucosyl](n) + ADP-alpha-D-glucose = [(1-&gt;4)-alpha-D-glucosyl](n+1) + ADP + H(+). Its pathway is glycan biosynthesis; glycogen biosynthesis. Functionally, synthesizes alpha-1,4-glucan chains using ADP-glucose. The protein is Glycogen synthase of Dechloromonas aromatica (strain RCB).